The chain runs to 152 residues: Ribosome maturation factor RimP (152 aa).

This sequence belongs to the RimP family.

The protein localises to the cytoplasm. Functionally, required for maturation of 30S ribosomal subunits. This chain is Ribosome maturation factor RimP, found in Ectopseudomonas mendocina (strain ymp) (Pseudomonas mendocina).